The chain runs to 383 residues: ATP phosphoribosyltransferase regulatory subunit (383 aa).

It belongs to the class-II aminoacyl-tRNA synthetase family. HisZ subfamily. Heteromultimer composed of HisG and HisZ subunits.

The protein localises to the cytoplasm. Its pathway is amino-acid biosynthesis; L-histidine biosynthesis; L-histidine from 5-phospho-alpha-D-ribose 1-diphosphate: step 1/9. Its function is as follows. Required for the first step of histidine biosynthesis. May allow the feedback regulation of ATP phosphoribosyltransferase activity by histidine. The sequence is that of ATP phosphoribosyltransferase regulatory subunit from Neisseria meningitidis serogroup C (strain 053442).